Consider the following 445-residue polypeptide: MTTSTQAPSTKAQGEELREQVLAAARRAKQAAAELAVANRDTKDALLHDMADALVRRAPEIIAANDLDVAAGREAGLAEDMIDRLRLDDDRIAGMADGLRTVAGLPDPVGEVLRGQVLPNGLQLQQVRVPLGVVGIVYEGRPNVTVDAAGLTLKAGNAVLLRGSSSAERSNTVLVSILTDVVVEHGLPADSVQLLPCHDRASVRYLITARGLVDVVIPRGGAGLISAVVEQATVPAIETGVGNCHVYVDAKADVDTALRILLNSKARRVSVCNAAENLLVHQDIAAEFLPRALSELHSAGVTVHGDEQVVEAGGPNVVPATAEDWDTEYLSHDIAAAVVESLPAAVEHIRAHGSGHTEAIVTDDVRAARQFSAQVDAAAVMVNASTAFTDGGEFGMGAEIGISTQKLHARGPMGLPELTSTKWLAFGDGHVRGTGASGVNSCPAG.

The protein belongs to the gamma-glutamyl phosphate reductase family.

The protein resides in the cytoplasm. It carries out the reaction L-glutamate 5-semialdehyde + phosphate + NADP(+) = L-glutamyl 5-phosphate + NADPH + H(+). The protein operates within amino-acid biosynthesis; L-proline biosynthesis; L-glutamate 5-semialdehyde from L-glutamate: step 2/2. Functionally, catalyzes the NADPH-dependent reduction of L-glutamate 5-phosphate into L-glutamate 5-semialdehyde and phosphate. The product spontaneously undergoes cyclization to form 1-pyrroline-5-carboxylate. This is Gamma-glutamyl phosphate reductase from Saccharopolyspora erythraea (strain ATCC 11635 / DSM 40517 / JCM 4748 / NBRC 13426 / NCIMB 8594 / NRRL 2338).